We begin with the raw amino-acid sequence, 1875 residues long: Nonribosomal peptide synthetase otaB (1875 aa).

Residues 202-590 (GQVRENGDRA…SIRFAGRRQA (389 aa)) are adenylation 1. The Carrier domain maps to 724-800 (SPMTAAERVM…DLVAHIKDAG (77 aa)). Position 761 is an O-(pantetheine 4'-phosphoryl)serine (Ser-761). Positions 836 to 1245 (EDVYPCTTLQ…LVSPLDEERL (410 aa)) are condensation. Residues 1264–1659 (QKQSYAQPQA…ARKDTQVKIR (396 aa)) form an adenylation 2 region.

The protein belongs to the NRP synthetase family.

The enzyme catalyses 7-carboxymellein + L-phenylalanine + ATP = ochratoxin B + ADP + phosphate + H(+). The protein operates within mycotoxin biosynthesis. Nonribosomal peptide synthetase; part of the gene cluster that mediates the biosynthesis of ochratoxin A (OTA), a mycotoxin composed of a chlorinated type I polyketide dihydroisocoumarin moiety linked to L-phenylalanine, and demonstrated to have nephrotoxic, immunotoxic, genotoxic, neurotoxic, and teratogenic properties. OtaB is responsible for the linking of phenylalanine to the dihydroisocoumarin ring. The pathway begins with the highly reducing polyketide synthase otaA that catalyzes the formation of the isocoumarin group during the initial stages of biosynthesis, starting from one acetate and 4 malonate units, to originate the characteristic pentaketide skeleton 7-methylmellein (7-MM) of the OTA molecule. The newly identified cyclase otaY might be involved in the polyketide cyclization reaction during the initial steps of the OTA biosynthesis. 7-MM is then oxidized into 7-carboxymellein (also called ochratoxin beta) by the cytochrome P450 monooxygenase otaC. The NRPS encoded by the otaB gene is involved in the linking of phenylalanine to the dihydroisocoumarin ring. The reaction catalyzed by NRPS results in the production of ochratoxin B (OTB), which is the non-chlorinated analog of OTA and which subsequently serves as the substrate of the halogenase otaD for chlorination activity to form the final molecular structure of OTA, containing a chlorine atom in the C-5 position of the molecule. The protein is Nonribosomal peptide synthetase otaB of Aspergillus carbonarius (strain ITEM 5010).